A 324-amino-acid chain; its full sequence is Lipoyl synthase, chloroplastic (324 aa).

2 stretches are compositionally biased toward low complexity: residues 1-12 (MCGPTATTVANA) and 20-29 (KGLPPGLKKP). The segment at 1–30 (MCGPTATTVANAGTGGETIKGLPPGLKKPP) is disordered. Cys58, Cys63, Cys69, Cys86, Cys90, Cys93, and Ser302 together coordinate [4Fe-4S] cluster. Residues 72-291 (GDTGTATVML…AYGEEVIGFR (220 aa)) enclose the Radical SAM core domain.

Belongs to the radical SAM superfamily. Lipoyl synthase family. The cofactor is [4Fe-4S] cluster.

It localises to the plastid. Its subcellular location is the chloroplast. The catalysed reaction is [[Fe-S] cluster scaffold protein carrying a second [4Fe-4S](2+) cluster] + N(6)-octanoyl-L-lysyl-[protein] + 2 oxidized [2Fe-2S]-[ferredoxin] + 2 S-adenosyl-L-methionine + 4 H(+) = [[Fe-S] cluster scaffold protein] + N(6)-[(R)-dihydrolipoyl]-L-lysyl-[protein] + 4 Fe(3+) + 2 hydrogen sulfide + 2 5'-deoxyadenosine + 2 L-methionine + 2 reduced [2Fe-2S]-[ferredoxin]. The protein operates within protein modification; protein lipoylation via endogenous pathway; protein N(6)-(lipoyl)lysine from octanoyl-[acyl-carrier-protein]: step 2/2. In terms of biological role, catalyzes the radical-mediated insertion of two sulfur atoms into the C-6 and C-8 positions of the octanoyl moiety bound to the lipoyl domains of lipoate-dependent enzymes, thereby converting the octanoylated domains into lipoylated derivatives. This chain is Lipoyl synthase, chloroplastic, found in Ostreococcus lucimarinus (strain CCE9901).